We begin with the raw amino-acid sequence, 477 residues long: MTVIFPNFSKSSVLIVGDVMLDRYWYGPTDKIAPEAPVPIVKVNKIIDRPGGAANVAMNIASLGARSRLLGLTGVDEAAKILKKQLNESNIKWNFISVRTCPTIIKLRVMSRNQQLIRLDFEQYFNNVDTTKLLKQVELYLPKYKVLVLSDYAKGSLNCIEEIIKLARYMNVPVIVDPKGIQFSRYKGATLLTPNISEFESIVGSCRNEKILINRAQEIIIDYNLSALLITRSERGMTLCTRYAAPLYFSTQKKKVYHVTGAGDTVVGVLSAALSSGKSLEKACFLANLAASAVIKKSGTSTSNVTEMKNIMNSHICTTLPVGILDEKTLKQTISVVRNRGEKIVMTNGVFDILHSGHVSYLTNAKKLGDRLIVAVNSDGSTRRLKGKTRPINTLEQRMFILAALTVVDWVVPFYEDTPSRLVAYLSPDFLVKGGDYHVCDIEGSQGVLNRGGTVRVLNFQTGCSSSNIINAIKRKN.

The interval Met-1–Thr-319 is ribokinase. Asn-195 to Glu-198 contacts ATP. Asp-264 is a catalytic residue. The cytidylyltransferase stretch occupies residues Met-346–Asn-477.

In the N-terminal section; belongs to the carbohydrate kinase PfkB family. The protein in the C-terminal section; belongs to the cytidylyltransferase family. As to quaternary structure, homodimer.

The catalysed reaction is D-glycero-beta-D-manno-heptose 7-phosphate + ATP = D-glycero-beta-D-manno-heptose 1,7-bisphosphate + ADP + H(+). It carries out the reaction D-glycero-beta-D-manno-heptose 1-phosphate + ATP + H(+) = ADP-D-glycero-beta-D-manno-heptose + diphosphate. It participates in nucleotide-sugar biosynthesis; ADP-L-glycero-beta-D-manno-heptose biosynthesis; ADP-L-glycero-beta-D-manno-heptose from D-glycero-beta-D-manno-heptose 7-phosphate: step 1/4. It functions in the pathway nucleotide-sugar biosynthesis; ADP-L-glycero-beta-D-manno-heptose biosynthesis; ADP-L-glycero-beta-D-manno-heptose from D-glycero-beta-D-manno-heptose 7-phosphate: step 3/4. Functionally, catalyzes the phosphorylation of D-glycero-D-manno-heptose 7-phosphate at the C-1 position to selectively form D-glycero-beta-D-manno-heptose-1,7-bisphosphate. In terms of biological role, catalyzes the ADP transfer from ATP to D-glycero-beta-D-manno-heptose 1-phosphate, yielding ADP-D-glycero-beta-D-manno-heptose. The protein is Bifunctional protein HldE of Blochmanniella pennsylvanica (strain BPEN).